The sequence spans 557 residues: NADP-dependent malic enzyme (557 aa).

The Proton donor role is filled by Y91. R144 contacts NADP(+). Positions 144 and 162 each coordinate substrate. The active-site Proton acceptor is K162. Residues E234 and D235 each contribute to the Mn(2+) site. N238 contacts NADP(+). D258 lines the Mn(2+) pocket. Residues 291-294 (AGEA), S325, N397, and N443 contribute to the NADP(+) site. A substrate-binding site is contributed by N443.

It belongs to the malic enzymes family. As to quaternary structure, homotetramer. Mg(2+) is required as a cofactor. Mn(2+) serves as cofactor. The N-terminus is blocked.

The protein resides in the cytoplasm. It catalyses the reaction (S)-malate + NADP(+) = pyruvate + CO2 + NADPH. The enzyme catalyses oxaloacetate + H(+) = pyruvate + CO2. In Columba livia (Rock dove), this protein is NADP-dependent malic enzyme (ME1).